We begin with the raw amino-acid sequence, 204 residues long: Nascent polypeptide-associated complex subunit alpha (204 aa).

Over residues 1-19 (MADPRVEELPDEEVPKANV) the composition is skewed to basic and acidic residues. Disordered stretches follow at residues 1–47 (MADP…IHSR) and 118–167 (QLAA…GLEA). Positions 22–32 (AGSDSESEAGE) are enriched in acidic residues. In terms of domain architecture, NAC-A/B spans 46–111 (SRNEKKARKA…AKIEDLNSQA (66 aa)). A compositionally biased stretch (low complexity) spans 118–128 (QLAAAEAAAGE). Basic and acidic residues predominate over residues 129-151 (HAGHDHDHDHGKGKAPETEAKKE). A compositionally biased stretch (acidic residues) spans 152 to 164 (EEEDDGEEVDETG). The UBA domain maps to 165-204 (LEAKDIELVMAQANVSRKKAVKALRENDNDIVNSIMALSI).

This sequence belongs to the NAC-alpha family. In terms of assembly, part of the nascent polypeptide-associated complex (NAC), consisting of egd2 and egd1. NAC associates with ribosomes via egd1.

The protein resides in the cytoplasm. It localises to the nucleus. Functionally, component of the nascent polypeptide-associated complex (NAC), a dynamic component of the ribosomal exit tunnel, protecting the emerging polypeptides from interaction with other cytoplasmic proteins to ensure appropriate nascent protein targeting. The NAC complex also promotes mitochondrial protein import by enhancing productive ribosome interactions with the outer mitochondrial membrane and blocks the inappropriate interaction of ribosomes translating non-secretory nascent polypeptides with translocation sites in the membrane of the endoplasmic reticulum. Egd2 may also be involved in transcription regulation. The protein is Nascent polypeptide-associated complex subunit alpha (egd2) of Aspergillus fumigatus (strain ATCC MYA-4609 / CBS 101355 / FGSC A1100 / Af293) (Neosartorya fumigata).